Reading from the N-terminus, the 113-residue chain is Ig kappa chain V-II region 17S29.1 (113 aa).

The framework-1 stretch occupies residues 1 to 23 (DIVMTQAVFSNPVTLGTSASISC). Cys-23 and Cys-93 are oxidised to a cystine. A complementarity-determining-1 region spans residues 24–39 (RSSKSLLHSNGITYLY). The framework-2 stretch occupies residues 40-54 (WYLQKPGQSPQLLLY). The tract at residues 55–61 (QMSNLAS) is complementarity-determining-2. A framework-3 region spans residues 62 to 93 (GVPDRFSSSGSGTDFTLRISRVEAEDVGVYYC). The complementarity-determining-3 stretch occupies residues 94–102 (AHNLELPYT). A framework-4 region spans residues 103–112 (FGGGTKLEIK).

In terms of biological role, anti-streptococcal group A carbohydrate antibody. The sequence is that of Ig kappa chain V-II region 17S29.1 from Mus musculus (Mouse).